An 813-amino-acid polypeptide reads, in one-letter code: Kinesin-like protein KIN-8B (813 aa).

Positions Thr-14–Ile-345 constitute a Kinesin motor domain. Gly-104–Thr-111 is an ATP binding site. Positions Ile-349 to Lys-391 form a coiled coil. Disordered regions lie at residues Gly-664–Ala-694 and Ala-756–Gln-813. Polar residues-rich tracts occupy residues Tyr-682–Ala-694, Gly-761–Thr-791, and Lys-804–Gln-813.

The protein belongs to the TRAFAC class myosin-kinesin ATPase superfamily. Kinesin family. KIN-8 subfamily.

This is Kinesin-like protein KIN-8B from Arabidopsis thaliana (Mouse-ear cress).